Consider the following 741-residue polypeptide: NAD(P)H-quinone oxidoreductase subunit 5, chloroplastic (741 aa).

The next 16 helical transmembrane spans lie at 9-29 (WIIP…LLLF), 40-60 (WTFL…YLSI), 89-109 (IDPL…LVLI), 125-145 (FAYM…SNLI), 147-167 (VYFF…FWFT), 185-205 (GDFG…SFEF), 221-241 (VNLL…IAKS), 258-278 (TPIS…FLVA), 280-300 (LLPL…IGII), 327-347 (LGYM…FHLI), 354-374 (ALLF…VGYS), 396-416 (TAFL…CFWS), 425-445 (LLFS…TAFY), 547-567 (ILFP…IGIP), 602-622 (FLQN…IAYC), and 720-740 (ISSY…ILFY).

The protein belongs to the complex I subunit 5 family. As to quaternary structure, NDH is composed of at least 16 different subunits, 5 of which are encoded in the nucleus.

The protein localises to the plastid. Its subcellular location is the chloroplast thylakoid membrane. The catalysed reaction is a plastoquinone + NADH + (n+1) H(+)(in) = a plastoquinol + NAD(+) + n H(+)(out). It catalyses the reaction a plastoquinone + NADPH + (n+1) H(+)(in) = a plastoquinol + NADP(+) + n H(+)(out). In terms of biological role, NDH shuttles electrons from NAD(P)H:plastoquinone, via FMN and iron-sulfur (Fe-S) centers, to quinones in the photosynthetic chain and possibly in a chloroplast respiratory chain. The immediate electron acceptor for the enzyme in this species is believed to be plastoquinone. Couples the redox reaction to proton translocation, and thus conserves the redox energy in a proton gradient. The protein is NAD(P)H-quinone oxidoreductase subunit 5, chloroplastic (ndhF) of Arabis hirsuta (Hairy rock-cress).